The chain runs to 44 residues: Conotoxin S5.1 (44 aa).

Post-translationally, contains 3 disulfide bonds. Expressed by the venom duct.

Its subcellular location is the secreted. The polypeptide is Conotoxin S5.1 (Conus striatus (Striated cone)).